The sequence spans 346 residues: Elongation factor Ts (346 aa).

Residues 80–83 (TDFV) form an involved in Mg(2+) ion dislocation from EF-Tu region.

The protein belongs to the EF-Ts family.

Its subcellular location is the cytoplasm. Functionally, associates with the EF-Tu.GDP complex and induces the exchange of GDP to GTP. It remains bound to the aminoacyl-tRNA.EF-Tu.GTP complex up to the GTP hydrolysis stage on the ribosome. The protein is Elongation factor Ts of Streptococcus pneumoniae (strain 70585).